The sequence spans 140 residues: Large ribosomal subunit protein uL11 (140 aa).

This sequence belongs to the universal ribosomal protein uL11 family. Part of the ribosomal stalk of the 50S ribosomal subunit. Interacts with L10 and the large rRNA to form the base of the stalk. L10 forms an elongated spine to which L12 dimers bind in a sequential fashion forming a multimeric L10(L12)X complex. Post-translationally, one or more lysine residues are methylated.

Functionally, forms part of the ribosomal stalk which helps the ribosome interact with GTP-bound translation factors. The polypeptide is Large ribosomal subunit protein uL11 (Oleidesulfovibrio alaskensis (strain ATCC BAA-1058 / DSM 17464 / G20) (Desulfovibrio alaskensis)).